The sequence spans 68 residues: DNA-directed RNA polymerase subunit omega (68 aa).

This sequence belongs to the RNA polymerase subunit omega family. As to quaternary structure, the RNAP catalytic core consists of 2 alpha, 1 beta, 1 beta' and 1 omega subunit. When a sigma factor is associated with the core the holoenzyme is formed, which can initiate transcription.

It catalyses the reaction RNA(n) + a ribonucleoside 5'-triphosphate = RNA(n+1) + diphosphate. Functionally, promotes RNA polymerase assembly. Latches the N- and C-terminal regions of the beta' subunit thereby facilitating its interaction with the beta and alpha subunits. The polypeptide is DNA-directed RNA polymerase subunit omega (Geobacter sp. (strain M21)).